A 729-amino-acid polypeptide reads, in one-letter code: Triadin (729 aa).

A disordered region spans residues Met-1 to Pro-28. The Cytoplasmic segment spans residues Met-1 to Pro-47. Polar residues predominate over residues Gly-8–Val-24. Residues Ala-48 to Phe-68 traverse the membrane as a helical segment. Over Asp-69–Gln-729 the chain is Lumenal. N-linked (GlcNAc...) asparagine glycosylation is present at Asn-75. Positions Glu-117–Asp-129 are enriched in acidic residues. 3 disordered regions span residues Glu-117 to Asp-265, Asp-281 to Gln-682, and Pro-705 to Gln-729. Basic and acidic residues-rich tracts occupy residues Lys-130–Asp-265, Leu-309–Glu-357, Ala-371–Ile-433, Gly-444–Pro-509, Gly-516–Lys-531, Val-538–Leu-562, Lys-580–Lys-598, and Glu-609–Thr-674. Asn-647 carries N-linked (GlcNAc...) asparagine glycosylation. Residues Ser-715–Gln-729 show a composition bias toward polar residues.

As to quaternary structure, homooligomer of variable subunit number; disulfide-linked. Interacts with CASQ1 and RYR1 in skeletal muscle. Interacts with CASQ2. Phosphorylated by CaMK2. In terms of processing, N-glycosylated.

Its subcellular location is the cell membrane. It localises to the sarcoplasmic reticulum membrane. Functionally, contributes to the regulation of lumenal Ca2+ release via the sarcoplasmic reticulum calcium release channels RYR1 and RYR2, a key step in triggering skeletal and heart muscle contraction. Required for normal organization of the triad junction, where T-tubules and the sarcoplasmic reticulum terminal cisternae are in close contact. Required for normal skeletal muscle strength. Plays a role in excitation-contraction coupling in the heart and in regulating the rate of heart beats. The sequence is that of Triadin (TRDN) from Homo sapiens (Human).